Consider the following 1863-residue polypeptide: 5'-3' DNA helicase ZGRF1 (1863 aa).

3 disordered regions span residues 78-110 (SRAV…QPSG), 132-196 (ENSE…PLSL), and 300-349 (TQSI…PEAQ). Over residues 81 to 90 (VEPDGSREAL) the composition is skewed to basic and acidic residues. Residues 92–105 (SGSRTLVSSSRSLG) are compositionally biased toward low complexity. 2 stretches are compositionally biased toward polar residues: residues 173-185 (PVST…ITFS) and 300-321 (TQSI…TTSR). Phosphoserine occurs at positions 331 and 445. Disordered regions lie at residues 460–496 (PVSP…SKSN), 524–545 (TSDT…ERWE), and 610–664 (GDVK…GVSP). The span at 533–545 (EDSRLSQDSERWE) shows a compositional bias: basic and acidic residues. Residues Cys-1111, His-1113, Cys-1136, and Cys-1144 each contribute to the Zn(2+) site. The segment at 1111 to 1153 (CHHNQPAKLVMVKKEGPNKGRLFYTCDKSKDNQCKFFKWLEEV) adopts a GRF-type zinc-finger fold.

As to quaternary structure, interacts with DNA repair protein RAD51; the interaction promotes RAD51 strand exchange activity. Also interacts with DNA repair proteins EXO1 and BRCA1; the interactions are increased following DNA damage induction.

The protein resides in the nucleus. It catalyses the reaction ATP + H2O = ADP + phosphate + H(+). The catalysed reaction is Couples ATP hydrolysis with the unwinding of duplex DNA at the replication fork by translocating in the 5'-3' direction. This creates two antiparallel DNA single strands (ssDNA). The leading ssDNA polymer is the template for DNA polymerase III holoenzyme which synthesizes a continuous strand.. 5'-3' DNA helicase which is recruited to sites of DNA damage and promotes repair of replication-blocking DNA lesions through stimulation of homologous recombination (HR). Promotes HR by directly stimulating RAD51-mediated strand exchange activity. Not required to load RAD51 at sites of DNA damage but promotes recombinational repair after RAD51 recruitment. Also promotes HR by positively regulating EXO1-mediated DNA end resection of DNA double-strand breaks. Required for recruitment of replication protein RPA2 to DNA damage sites. Promotes the initiation of the G2/M checkpoint but not its maintenance. Catalyzes Holliday junction branch migration and dissociation of D-loops and DNA flaps. The polypeptide is 5'-3' DNA helicase ZGRF1 (Zgrf1) (Mus musculus (Mouse)).